The chain runs to 89 residues: Putative membrane protein insertion efficiency factor (89 aa).

The disordered stretch occupies residues 68–89; it reads VPPPNSDARNAPHEAEASSHRL. Residues 77 to 89 are compositionally biased toward basic and acidic residues; it reads NAPHEAEASSHRL.

It belongs to the UPF0161 family.

Its subcellular location is the cell inner membrane. Functionally, could be involved in insertion of integral membrane proteins into the membrane. The chain is Putative membrane protein insertion efficiency factor from Burkholderia mallei (strain SAVP1).